The sequence spans 306 residues: Ornithine carbamoyltransferase (306 aa).

Carbamoyl phosphate-binding positions include 46–49 (STRT), Q73, R97, and 124–127 (HPTQ). Residues N156, D220, and 224-225 (SM) contribute to the L-ornithine site. Residues 260-261 (CL) and R288 contribute to the carbamoyl phosphate site.

Belongs to the aspartate/ornithine carbamoyltransferase superfamily. OTCase family.

It localises to the cytoplasm. The enzyme catalyses carbamoyl phosphate + L-ornithine = L-citrulline + phosphate + H(+). It participates in amino-acid biosynthesis; L-arginine biosynthesis; L-arginine from L-ornithine and carbamoyl phosphate: step 1/3. Its function is as follows. Reversibly catalyzes the transfer of the carbamoyl group from carbamoyl phosphate (CP) to the N(epsilon) atom of ornithine (ORN) to produce L-citrulline. This Campylobacter jejuni subsp. jejuni serotype O:23/36 (strain 81-176) protein is Ornithine carbamoyltransferase.